The sequence spans 1593 residues: THO complex subunit 2 (1593 aa).

The interval 1–163 (MAAAAVVVPA…KLFYKQQKFN (163 aa)) is anchor domain; interaction with THOC5 and THOC7. Residues 164-534 (LLREENEGYA…GQWKNETYNS (371 aa)) form a bow domain; interaction with THOC1 dock domain and THOC3 region. Positions 322–341 (KMDEREKEKEKEEEKVEKPP) are disordered. Positions 535 to 686 (HPLLVKVKAQ…LILKEVVQKM (152 aa)) are MIF4G domain; interaction with THOC3 and DDX39B. The stern domain stretch occupies residues 687-1174 (AGIEITEEMT…LAMGYSGQLK (488 aa)). The stretch at 896 to 965 (HTSYEREVNK…LKLEKDNWLL (70 aa)) forms a coiled coil. The Nuclear localization signal motif lies at 923-928 (KKKKEK). A charged domain region spans residues 1175 to 1593 (SRKSYMIPEN…KHHKSSDKHR (419 aa)). The interval 1184–1593 (NEFHHKDPPP…KHHKSSDKHR (410 aa)) is disordered. Basic and acidic residues predominate over residues 1218–1234 (KSDESSTEETDKSRERS). Ser-1222 bears the Phosphoserine mark. A compositionally biased stretch (low complexity) spans 1251-1263 (GNSSNGNSGSNSN). Composition is skewed to basic and acidic residues over residues 1265 to 1285 (AVKE…KEKT), 1294 to 1343 (VLGK…EKFK), and 1353 to 1383 (STQE…KGGE). Phosphothreonine is present on Thr-1385. A phosphoserine mark is found at Ser-1390, Ser-1393, and Ser-1417. The segment covering 1416-1425 (PSPSHSSTVK) has biased composition (polar residues). At Thr-1443 the chain carries Phosphothreonine. The span at 1449–1504 (KSKEREMDKKDLDKSRERSREREKKDEKDRKERKRDHSNNDREVPPDLTKRRKEEN) shows a compositional bias: basic and acidic residues. Phosphoserine occurs at positions 1450, 1486, and 1516. A compositionally biased stretch (basic and acidic residues) spans 1524-1582 (NEKDKEKNKSKSSGKEKGSDSFKSEKMDKISSGGKKESRHDKEKIEKKEKRDSSGGKEE). The span at 1583–1593 (KKHHKSSDKHR) shows a compositional bias: basic residues.

The protein belongs to the THOC2 family. In terms of assembly, component of the THO subcomplex, which is composed of THOC1, THOC2, THOC3, THOC5, THOC6 and THOC7. The THO subcomplex interacts with DDX39B to form the THO-DDX39B complex which multimerizes into a 28-subunit tetrameric assembly. Component of the transcription/export (TREX) complex at least composed of ALYREF/THOC4, DDX39B, SARNP/CIP29, CHTOP and the THO subcomplex; in the complex interacts with THOC1, THOC3, THOC5, THOC7 and DDX39B. TREX seems to have a dynamic structure involving ATP-dependent remodeling. Interacts with POLDIP3 and ZC3H11A. In terms of tissue distribution, expressed in the hippocampus and the cerebral cortex.

It localises to the nucleus. It is found in the nucleus speckle. The protein localises to the cytoplasm. In terms of biological role, component of the THO subcomplex of the TREX complex which is thought to couple mRNA transcription, processing and nuclear export, and which specifically associates with spliced mRNA and not with unspliced pre-mRNA. Required for efficient export of polyadenylated RNA and spliced mRNA. The THOC1-THOC2-THOC3 core complex alone is sufficient to bind export factor NXF1-NXT1 and promote ATPase activity of DDX39B; in the complex THOC2 is the only component that directly interacts with DDX39B. TREX is recruited to spliced mRNAs by a transcription-independent mechanism, binds to mRNA upstream of the exon-junction complex (EJC) and is recruited in a splicing- and cap-dependent manner to a region near the 5' end of the mRNA where it functions in mRNA export to the cytoplasm via the TAP/NXF1 pathway. Required for NXF1 localization to the nuclear rim. THOC2 (and probably the THO complex) is involved in releasing mRNA from nuclear speckle domains. Functionally, (Microbial infection) The TREX complex is essential for the export of Kaposi's sarcoma-associated herpesvirus (KSHV) intronless mRNAs and infectious virus production. The chain is THO complex subunit 2 (THOC2) from Homo sapiens (Human).